Here is a 107-residue protein sequence, read N- to C-terminus: Nucleoid-associated protein amb4104 (107 aa).

It belongs to the YbaB/EbfC family. Homodimer.

It is found in the cytoplasm. The protein resides in the nucleoid. Its function is as follows. Binds to DNA and alters its conformation. May be involved in regulation of gene expression, nucleoid organization and DNA protection. This Paramagnetospirillum magneticum (strain ATCC 700264 / AMB-1) (Magnetospirillum magneticum) protein is Nucleoid-associated protein amb4104.